Consider the following 289-residue polypeptide: MPKTQYIAGVSGGPDSMLLLKLYHKKIACVVHVNYNKRTTALRDQKMVEEYCKQLKVPLIVHTVPEDTVWKKNFQAQARKIRFEQFQKAASLYKVDKLLLAHHRDDFIEQAKMQLDARKRAMYYGIKTRGELYGMKVYRPFIKYWKNEILALCEEHKVPYGIDETNAQPIYKRNQVRQEIANWSKEEKEEFYIGVCAMNRVIGQKLFSLMKRAKQWLAHPDVRELKRYPLPDQRQLVYSFLITHHIDVTGDKIDAILDFIQPFQQKHYRLKDEIFLSIKDERLTLLYKS.

An ATP-binding site is contributed by 11 to 16; sequence SGGPDS.

This sequence belongs to the tRNA(Ile)-lysidine synthase family.

The protein localises to the cytoplasm. The enzyme catalyses cytidine(34) in tRNA(Ile2) + L-lysine + ATP = lysidine(34) in tRNA(Ile2) + AMP + diphosphate + H(+). Ligates lysine onto the cytidine present at position 34 of the AUA codon-specific tRNA(Ile) that contains the anticodon CAU, in an ATP-dependent manner. Cytidine is converted to lysidine, thus changing the amino acid specificity of the tRNA from methionine to isoleucine. This is tRNA(Ile)-lysidine synthase from Mycoplasma pneumoniae (strain ATCC 29342 / M129 / Subtype 1) (Mycoplasmoides pneumoniae).